The sequence spans 105 residues: TMEM14 protein homolog YJR085C (105 aa).

Transmembrane regions (helical) follow at residues 26 to 46 (IPSL…GYLL), 53 to 73 (GLEM…IRGM), and 77 to 97 (FTKP…YYYY).

Belongs to the TMEM14 family.

The protein resides in the mitochondrion. Its subcellular location is the membrane. The polypeptide is TMEM14 protein homolog YJR085C (Saccharomyces cerevisiae (strain ATCC 204508 / S288c) (Baker's yeast)).